Reading from the N-terminus, the 505-residue chain is 2,3-bisphosphoglycerate-independent phosphoglycerate mutase (505 aa).

Mn(2+)-binding residues include D12 and S62. The active-site Phosphoserine intermediate is S62. Residues H123, 153–154 (RD), R185, R191, 257–260 (RPDR), and K330 each bind substrate. Mn(2+)-binding residues include D397, H401, D438, H439, and H456.

This sequence belongs to the BPG-independent phosphoglycerate mutase family. In terms of assembly, monomer. Mn(2+) serves as cofactor.

It catalyses the reaction (2R)-2-phosphoglycerate = (2R)-3-phosphoglycerate. Its pathway is carbohydrate degradation; glycolysis; pyruvate from D-glyceraldehyde 3-phosphate: step 3/5. Catalyzes the interconversion of 2-phosphoglycerate and 3-phosphoglycerate. This chain is 2,3-bisphosphoglycerate-independent phosphoglycerate mutase, found in Staphylococcus aureus (strain MRSA252).